A 239-amino-acid chain; its full sequence is Sugar fermentation stimulation protein homolog (239 aa).

The protein belongs to the SfsA family.

The sequence is that of Sugar fermentation stimulation protein homolog from Synechococcus sp. (strain JA-2-3B'a(2-13)) (Cyanobacteria bacterium Yellowstone B-Prime).